Reading from the N-terminus, the 509-residue chain is Histidine--tRNA ligase, cytoplasmic (509 aa).

An N-acetylalanine modification is found at A2. Positions 3–59 constitute a WHEP-TRS domain; that stretch reads ERAALEELVKLQGERVRGLKQQKASAELIEEEVAKLLKLKAQLGPDESKQKFVLKTP. At S66 the chain carries Phosphoserine. Residues 130 to 132, R157, Q173, D177, R326, and 330 to 331 contribute to the L-histidine site; these read DLT and YY. The residue at position 356 (S356) is a Phosphoserine.

This sequence belongs to the class-II aminoacyl-tRNA synthetase family. Homodimer.

Its subcellular location is the cytoplasm. It catalyses the reaction tRNA(His) + L-histidine + ATP = L-histidyl-tRNA(His) + AMP + diphosphate + H(+). Functionally, catalyzes the ATP-dependent ligation of histidine to the 3'-end of its cognate tRNA, via the formation of an aminoacyl-adenylate intermediate (His-AMP). Plays a role in axon guidance. This chain is Histidine--tRNA ligase, cytoplasmic (HARS1), found in Pongo abelii (Sumatran orangutan).